A 394-amino-acid polypeptide reads, in one-letter code: Histidinol dehydrogenase (394 aa).

NAD(+) contacts are provided by Tyr113, Gln172, and Asn195. The substrate site is built by Thr218, Gln240, and His243. Positions 240 and 243 each coordinate Zn(2+). Residues Glu294 and His295 each act as proton acceptor in the active site. Residues His295, Asp327, Glu380, and His385 each coordinate substrate. Residue Asp327 participates in Zn(2+) binding. His385 contributes to the Zn(2+) binding site.

Belongs to the histidinol dehydrogenase family. Zn(2+) serves as cofactor.

The catalysed reaction is L-histidinol + 2 NAD(+) + H2O = L-histidine + 2 NADH + 3 H(+). The protein operates within amino-acid biosynthesis; L-histidine biosynthesis; L-histidine from 5-phospho-alpha-D-ribose 1-diphosphate: step 9/9. Catalyzes the sequential NAD-dependent oxidations of L-histidinol to L-histidinaldehyde and then to L-histidine. The sequence is that of Histidinol dehydrogenase from Sulfurisphaera tokodaii (strain DSM 16993 / JCM 10545 / NBRC 100140 / 7) (Sulfolobus tokodaii).